The primary structure comprises 410 residues: MKKEVVVIGGGIVGLSCAYSMHKLGHKVCVIEKNDGANGTSFGNAGLISAFKKAPLSCPGVVLDTLKLMLKNQAPLKFHFGLNLKLYQWILKFVKSANAKSTHRTMALFERYGWLSIDMYHQMLKDGMDFWYKEDGLLMIYTLEESFEKKLKTCDNSGAYKILSAKETKEYMPVVNDNICGSVLLTENAHVDPGEVMHSLQEYLQNVGVEFLYNEEVIDFEFKNNLIEGVITHKEKIQAETIILATGANPTLIKKTKNDFLMMGAKGYSITFKMPEELKPKTSSLFADIFMAMTPRRDTVRITSKLELNTNNALIDKEQIANMKKNLAAFTQPFEMKDAIEWCGFRPLTPNDIPYLGYDKRYKNLIHATGLGWLGITFGPAIGKIIANLSQDGANEKNADIMLFSAFFRD.

9–14 provides a ligand contact to FAD; sequence GGGIVG.

This sequence belongs to the DadA oxidoreductase family. FAD serves as cofactor.

The protein localises to the cell inner membrane. The catalysed reaction is a D-alpha-amino acid + a quinone + H2O = a 2-oxocarboxylate + a quinol + NH4(+). In terms of biological role, catalyzes the oxidative deamination of D-amino acids. Has broad substrate specificity; is mostly active on D-proline, and to a lesser extent, on several other D-amino acids such as D-alanine, D-phenylalanine and D-serine. Mediates electron transport from D-proline to coenzyme Q1 in vitro, and is involved in the electron transport chain from D-proline to the c-type cytochrome in vivo. This is D-amino acid dehydrogenase from Helicobacter pylori (strain ATCC 700392 / 26695) (Campylobacter pylori).